The chain runs to 734 residues: Photosystem I P700 chlorophyll a apoprotein A2 (734 aa).

8 helical membrane passes run 46–69, 135–158, 175–199, 273–291, 330–353, 369–395, 417–439, and 517–535; these read IFAS…FHVA, LYQG…LHLQ, LNHH…HVAI, IAHH…GHQY, LHFQ…QHMY, AALY…IFFI, AIIS…LYVH, and FLVH…LILV. The [4Fe-4S] cluster site is built by Cys559 and Cys568. Transmembrane regions (helical) follow at residues 575 to 596 and 643 to 665; these read AFYL…YWHW and LSVW…MFLI. Chlorophyll a is bound by residues His654, Met662, and Tyr670. A phylloquinone-binding site is contributed by Trp671. Residues 707–727 form a helical membrane-spanning segment; that stretch reads LVGLAHFSVGYIFTYAAFLIA.

The protein belongs to the PsaA/PsaB family. The PsaA/B heterodimer binds the P700 chlorophyll special pair and subsequent electron acceptors. PSI consists of a core antenna complex that captures photons, and an electron transfer chain that converts photonic excitation into a charge separation. The eukaryotic PSI reaction center is composed of at least 11 subunits. It depends on P700 is a chlorophyll a/chlorophyll a' dimer, A0 is one or more chlorophyll a, A1 is one or both phylloquinones and FX is a shared 4Fe-4S iron-sulfur center. as a cofactor.

It is found in the plastid. It localises to the chloroplast thylakoid membrane. It carries out the reaction reduced [plastocyanin] + hnu + oxidized [2Fe-2S]-[ferredoxin] = oxidized [plastocyanin] + reduced [2Fe-2S]-[ferredoxin]. In terms of biological role, psaA and PsaB bind P700, the primary electron donor of photosystem I (PSI), as well as the electron acceptors A0, A1 and FX. PSI is a plastocyanin-ferredoxin oxidoreductase, converting photonic excitation into a charge separation, which transfers an electron from the donor P700 chlorophyll pair to the spectroscopically characterized acceptors A0, A1, FX, FA and FB in turn. Oxidized P700 is reduced on the lumenal side of the thylakoid membrane by plastocyanin. The sequence is that of Photosystem I P700 chlorophyll a apoprotein A2 from Chaetosphaeridium globosum (Charophycean green alga).